Consider the following 155-residue polypeptide: Large ribosomal subunit protein uL22c (155 aa).

It belongs to the universal ribosomal protein uL22 family. As to quaternary structure, part of the 50S ribosomal subunit.

It is found in the plastid. The protein localises to the chloroplast. This protein binds specifically to 23S rRNA. Its function is as follows. The globular domain of the protein is located near the polypeptide exit tunnel on the outside of the subunit, while an extended beta-hairpin is found that lines the wall of the exit tunnel in the center of the 70S ribosome. This Solanum bulbocastanum (Wild potato) protein is Large ribosomal subunit protein uL22c (rpl22).